The sequence spans 350 residues: sn-1 oleoyl-lipid 12-desaturase (350 aa).

Transmembrane regions (helical) follow at residues 41–61 and 64–84; these read AWTQ…SLAI and WFLL…FFVI. The Histidine box-1 motif lies at 86-90; the sequence is HDCGH. The helical transmembrane segment at 98-118 threads the bilayer; it reads WVNDLVGHIFMMPLIYPFHSW. The Histidine box-2 motif lies at 122–126; the sequence is HNHHH. A run of 2 helical transmembrane segments spans residues 196–216 and 219–239; these read VAVV…TTGI and FVKF…TFTI. A Histidine box-3 motif is present at residues 287-291; it reads HHLST.

This sequence belongs to the fatty acid desaturase type 2 family. The cofactor is Fe(2+).

Its subcellular location is the membrane. It carries out the reaction a 1-[(9Z)-octadecenoyl]-2-acyl-glycerolipid + 2 reduced [2Fe-2S]-[ferredoxin] + O2 + 2 H(+) = a 1-[(9Z,12Z)-octadecdienoyl]-2-acyl-glycerolipid + 2 oxidized [2Fe-2S]-[ferredoxin] + 2 H2O. The protein operates within lipid metabolism; polyunsaturated fatty acid biosynthesis. Desaturase involved in fatty acid biosynthesis. Introduces a double bond at carbon 12 of oleoyl groups (18:1) attached to the sn-1 position of the glycerol moiety of membrane glycerolipids. This Anabaena variabilis protein is sn-1 oleoyl-lipid 12-desaturase.